The chain runs to 521 residues: Sphingolipid C9-methyltransferase 2 (521 aa).

A run of 2 helical transmembrane segments spans residues V60–F80 and F85–I105. S-adenosyl-L-methionine-binding positions include Y225–T226, M262–G270, T288–Q293, and Y318–R319.

Belongs to the CFA/CMAS family.

It is found in the membrane. The catalysed reaction is a (4E,8E)-4-sphinga-4,8-dienine ceramide + S-adenosyl-L-methionine = a 9-methyl-(4E,8E)-sphinga-4,8-dienine ceramide + S-adenosyl-L-homocysteine + H(+). It functions in the pathway lipid metabolism; sphingolipid metabolism. In terms of biological role, catalyzes methylation of the sphingoid base component of glucosylceramides (GluCers) at the C9-position. Sphingolipid C9-methylation requires 4,8-desaturated ceramides as substrates. Glucosylceramides play important roles in growth, differentiation and pathogenicity. The methyl group at the C9-position distinguishes fungal glucosylceramides from those of plants and animals and may thus play a role in host-pathogen interactions enabling the host to recognize the fungal attack and initiate specific defense responses. However, C-9 methylation of GlcCers is not essential for the sensitivity of F.graminearum to plant defensins MsDef1 and RsAFP2. The polypeptide is Sphingolipid C9-methyltransferase 2 (Gibberella zeae (strain ATCC MYA-4620 / CBS 123657 / FGSC 9075 / NRRL 31084 / PH-1) (Wheat head blight fungus)).